A 186-amino-acid polypeptide reads, in one-letter code: UPF0301 protein NTHI0415 (186 aa).

Belongs to the UPF0301 (AlgH) family.

In Haemophilus influenzae (strain 86-028NP), this protein is UPF0301 protein NTHI0415.